Here is a 114-residue protein sequence, read N- to C-terminus: Large ribosomal subunit protein bL19 (114 aa).

Belongs to the bacterial ribosomal protein bL19 family.

This protein is located at the 30S-50S ribosomal subunit interface and may play a role in the structure and function of the aminoacyl-tRNA binding site. This Heliobacterium modesticaldum (strain ATCC 51547 / Ice1) protein is Large ribosomal subunit protein bL19.